Here is a 143-residue protein sequence, read N- to C-terminus: Transcriptional regulator MraZ (143 aa).

SpoVT-AbrB domains are found at residues 5 to 47 (EYEH…PRSV) and 76 to 119 (AADM…APRR).

It belongs to the MraZ family. Forms oligomers.

It localises to the cytoplasm. Its subcellular location is the nucleoid. The sequence is that of Transcriptional regulator MraZ from Roseiflexus sp. (strain RS-1).